The chain runs to 263 residues: Hydroxyethylthiazole kinase (263 aa).

Position 39 (methionine 39) interacts with substrate. Lysine 115 and threonine 160 together coordinate ATP. Glycine 187 is a substrate binding site.

This sequence belongs to the Thz kinase family. Mg(2+) serves as cofactor.

The catalysed reaction is 5-(2-hydroxyethyl)-4-methylthiazole + ATP = 4-methyl-5-(2-phosphooxyethyl)-thiazole + ADP + H(+). Its pathway is cofactor biosynthesis; thiamine diphosphate biosynthesis; 4-methyl-5-(2-phosphoethyl)-thiazole from 5-(2-hydroxyethyl)-4-methylthiazole: step 1/1. Its function is as follows. Catalyzes the phosphorylation of the hydroxyl group of 4-methyl-5-beta-hydroxyethylthiazole (THZ). This Staphylococcus aureus (strain JH9) protein is Hydroxyethylthiazole kinase.